The primary structure comprises 201 residues: LexA repressor (201 aa).

Positions 28 to 48 (MRDIAAHLRISGTLGVSKHLT) form a DNA-binding region, H-T-H motif. Active-site for autocatalytic cleavage activity residues include Ser-120 and Lys-157.

The protein belongs to the peptidase S24 family. Homodimer.

The catalysed reaction is Hydrolysis of Ala-|-Gly bond in repressor LexA.. Represses a number of genes involved in the response to DNA damage (SOS response), including recA and lexA. In the presence of single-stranded DNA, RecA interacts with LexA causing an autocatalytic cleavage which disrupts the DNA-binding part of LexA, leading to derepression of the SOS regulon and eventually DNA repair. The protein is LexA repressor of Geobacter metallireducens (strain ATCC 53774 / DSM 7210 / GS-15).